The following is a 225-amino-acid chain: Uracil-DNA glycosylase (225 aa).

The active-site Proton acceptor is D64.

The protein belongs to the uracil-DNA glycosylase (UDG) superfamily. UNG family.

Its subcellular location is the cytoplasm. The enzyme catalyses Hydrolyzes single-stranded DNA or mismatched double-stranded DNA and polynucleotides, releasing free uracil.. Functionally, excises uracil residues from the DNA which can arise as a result of misincorporation of dUMP residues by DNA polymerase or due to deamination of cytosine. In Agathobacter rectalis (strain ATCC 33656 / DSM 3377 / JCM 17463 / KCTC 5835 / VPI 0990) (Eubacterium rectale), this protein is Uracil-DNA glycosylase.